Here is a 513-residue protein sequence, read N- to C-terminus: Cytochrome P450 monooxygenase eqxH (513 aa).

The chain crosses the membrane as a helical span at residues 13–32 (QYAILCGITVFTLFIVQLSL). N-linked (GlcNAc...) asparagine glycans are attached at residues Asn130 and Asn295. Heme is bound at residue Cys449.

The protein belongs to the cytochrome P450 family. Requires heme as cofactor.

The protein resides in the membrane. It functions in the pathway mycotoxin biosynthesis. In terms of biological role, cytochrome P450 monooxygenase; part of the gene cluster that mediates the biosynthesis of equisetin, a trans-fused decalin-containing tetramic acid with antimicrobial activity. The PKS module of eqxS together with the enoylreductase eqxC catalyze the formation of the polyketide unit which is then conjugated to L-serine by the condensation domain of the eqxS NRPS module. Activity of the Dieckmann cyclase domain (RED) results in release of the Dieckmann product intermediate. Diels-Alderase eqx3 is involved in endo-selective Diels-Alder cycloaddition to form the decalin ring, leading to the production of N-desmethylequisetin also called trichosetin. Subsequent N-methylation is carried out by eqxD to give equisetin. The polypeptide is Cytochrome P450 monooxygenase eqxH (Fusarium heterosporum).